A 582-amino-acid polypeptide reads, in one-letter code: Heterogeneous nuclear ribonucleoprotein C homolog (582 aa).

The segment at 1–21 (MSEALETGDPSPPPPIVSENG) is disordered. 3 C2H2-type zinc fingers span residues 102–125 (YYCC…RGYH), 130–154 (SSCD…RRTH), and 213–235 (YACL…VEMH).

It is found in the nucleus. The sequence is that of Heterogeneous nuclear ribonucleoprotein C homolog from Caenorhabditis elegans.